Consider the following 357-residue polypeptide: Uroporphyrinogen decarboxylase (357 aa).

Residues 30 to 34 (RQAGR), D79, Y154, S209, and H336 each bind substrate.

Belongs to the uroporphyrinogen decarboxylase family. Homodimer.

The protein localises to the cytoplasm. The enzyme catalyses uroporphyrinogen III + 4 H(+) = coproporphyrinogen III + 4 CO2. The protein operates within porphyrin-containing compound metabolism; protoporphyrin-IX biosynthesis; coproporphyrinogen-III from 5-aminolevulinate: step 4/4. Its function is as follows. Catalyzes the decarboxylation of four acetate groups of uroporphyrinogen-III to yield coproporphyrinogen-III. The protein is Uroporphyrinogen decarboxylase of Mycobacterium bovis (strain ATCC BAA-935 / AF2122/97).